A 92-amino-acid polypeptide reads, in one-letter code: Large ribosomal subunit protein eL43 (92 aa).

Positions 39, 42, 57, and 60 each coordinate Zn(2+). The C4-type zinc finger occupies 39 to 60 (CPVCGFPKLKRASTSIWVCGKC).

This sequence belongs to the eukaryotic ribosomal protein eL43 family. Putative zinc-binding subfamily. In terms of assembly, part of the 50S ribosomal subunit. It depends on Zn(2+) as a cofactor.

In terms of biological role, binds to the 23S rRNA. The polypeptide is Large ribosomal subunit protein eL43 (Methanocaldococcus jannaschii (strain ATCC 43067 / DSM 2661 / JAL-1 / JCM 10045 / NBRC 100440) (Methanococcus jannaschii)).